Reading from the N-terminus, the 97-residue chain is Non-pathogenic pore-forming peptide amoebapore A (97 aa).

The signal sequence occupies residues 1-20 (MKAIVFVLIFAVAFAVTLRQ). A Saposin B-type domain is found at 21 to 97 (GPIVCNLCTG…NAICAKIHAC (77 aa)). Disulfide bonds link Cys-25–Cys-97, Cys-28–Cys-91, and Cys-55–Cys-66.

In terms of assembly, monomer. Homodimer. Hexamer; formed during insertion in the membrane.

It localises to the cytoplasmic granule. Its function is as follows. Forms pores in the cell membrane of host cells. Implicated in the cytolytic activity of the parasite. Pore forming activity is lower compared to the activity of ameobapore A from the pathogenic strain HM-1:IMSS. In Entamoeba histolytica, this protein is Non-pathogenic pore-forming peptide amoebapore A.